A 353-amino-acid polypeptide reads, in one-letter code: 4-hydroxy-3-methylbut-2-en-1-yl diphosphate synthase (flavodoxin) (353 aa).

Residues Cys265, Cys268, Cys300, and Glu307 each coordinate [4Fe-4S] cluster.

The protein belongs to the IspG family. [4Fe-4S] cluster serves as cofactor.

The enzyme catalyses (2E)-4-hydroxy-3-methylbut-2-enyl diphosphate + oxidized [flavodoxin] + H2O + 2 H(+) = 2-C-methyl-D-erythritol 2,4-cyclic diphosphate + reduced [flavodoxin]. Its pathway is isoprenoid biosynthesis; isopentenyl diphosphate biosynthesis via DXP pathway; isopentenyl diphosphate from 1-deoxy-D-xylulose 5-phosphate: step 5/6. Functionally, converts 2C-methyl-D-erythritol 2,4-cyclodiphosphate (ME-2,4cPP) into 1-hydroxy-2-methyl-2-(E)-butenyl 4-diphosphate. The protein is 4-hydroxy-3-methylbut-2-en-1-yl diphosphate synthase (flavodoxin) of Sulfurihydrogenibium sp. (strain YO3AOP1).